The sequence spans 1053 residues: Zinc finger and BTB domain-containing protein 11 (1053 aa).

A compositionally biased stretch (acidic residues) spans 141-156 (LDLESGEESNESEDDL). Residues 141-173 (LDLESGEESNESEDDLSNFTSSPTTASKPAKKK) are disordered. Low complexity predominate over residues 157-168 (SNFTSSPTTASK). In terms of domain architecture, BTB spans 214–282 (CDVTLLIEGE…AYTSVLSFDF (69 aa)). A disordered region spans residues 546-566 (LVQRGKKMKQPKRDAKENTEE). Over residues 556-566 (PKRDAKENTEE) the composition is skewed to basic and acidic residues. 2 consecutive C2H2-type zinc fingers follow at residues 569 to 591 (HKCG…KLKH) and 597 to 619 (YKCP…LIRH). The tract at residues 619–643 (HTRKDAPSSSSSNSTSNEASGTSSE) is disordered. Residues 626 to 642 (SSSSSNSTSNEASGTSS) show a composition bias toward low complexity. 10 consecutive C2H2-type zinc fingers follow at residues 651–673 (FICS…MLKH), 679–701 (HACQ…QSLH), 707–729 (FQCE…MSIH), 735–757 (YLCS…FKKH), 766–788 (YHCT…MNKH), 794–816 (FQCQ…VKSH), 822–846 (YRCN…KATH), 858–880 (RVCE…MNNH), 886–908 (FECL…VRTH), and 914–937 (YVCP…TKFH). Lysine 1043 participates in a covalent cross-link: Glycyl lysine isopeptide (Lys-Gly) (interchain with G-Cter in SUMO2). Serine 1050 is subject to Phosphoserine.

It localises to the nucleus. Its subcellular location is the nucleolus. Its function is as follows. May be involved in transcriptional regulation. The protein is Zinc finger and BTB domain-containing protein 11 of Homo sapiens (Human).